The chain runs to 179 residues: Dual-action ribosomal maturation protein DarP (179 aa).

This sequence belongs to the DarP family.

It is found in the cytoplasm. Member of a network of 50S ribosomal subunit biogenesis factors which assembles along the 30S-50S interface, preventing incorrect 23S rRNA structures from forming. Promotes peptidyl transferase center (PTC) maturation. The polypeptide is Dual-action ribosomal maturation protein DarP (Aliivibrio fischeri (strain ATCC 700601 / ES114) (Vibrio fischeri)).